A 381-amino-acid polypeptide reads, in one-letter code: Creatine kinase B-type (381 aa).

Ser4 carries the phosphoserine modification. One can recognise a Phosphagen kinase N-terminal domain in the interval 11-98; the sequence is KLRFPAEDEF…FDPIIEERHG (88 aa). Thr35 bears the Phosphothreonine mark. Lys45 participates in a covalent cross-link: Glycyl lysine isopeptide (Lys-Gly) (interchain with G-Cter in ubiquitin). Val72 provides a ligand contact to creatine. Over residues 96-110 the composition is skewed to basic and acidic residues; that stretch reads RHGGYQPSDEHKTDL. Residues 96–123 are disordered; it reads RHGGYQPSDEHKTDLNPDNLQGGDDLDP. Lys107 participates in a covalent cross-link: Glycyl lysine isopeptide (Lys-Gly) (interchain with G-Cter in ubiquitin). At Tyr125 the chain carries Phosphotyrosine. The 243-residue stretch at 125 to 367 folds into the Phosphagen kinase C-terminal domain; sequence YVLSSRVRTG…KLLIEMEQRL (243 aa). ATP contacts are provided by residues 128–132, Arg130, Arg132, and His191; that span reads SSRVR. The tract at residues 130–138 is internal MTS-like signal; the sequence is RVRTGRSIR. Ser199 is subject to Phosphoserine. Residue Glu232 coordinates creatine. ATP is bound at residue Arg236. 3'-nitrotyrosine is present on Tyr269. Residue Ser285 coordinates creatine. Arg292 contributes to the ATP binding site. Residue Ser309 is modified to Phosphoserine. ATP is bound by residues Arg320, 320-325, and Asp335; that span reads RGTGGV. Thr322 carries the post-translational modification Phosphothreonine. Lys381 is covalently cross-linked (Glycyl lysine isopeptide (Lys-Gly) (interchain with G-Cter in ubiquitin)).

This sequence belongs to the ATP:guanido phosphotransferase family. As to quaternary structure, dimer of identical or non-identical chains, which can be either B (brain type) or M (muscle type). With MM being the major form in skeletal muscle and myocardium, MB existing in myocardium, and BB existing in many tissues, especially brain. Interacts with SLC12A6 (via C-terminus); the interaction may be required for SLC12A6 potassium-chloride cotransport activity. Ubiquitinated by the ECS(ASB9) complex, leading to its degradation by the proteasome. In terms of tissue distribution, expressed in hippocampus and corpus callosum (at protein level).

Its subcellular location is the cytoplasm. The protein resides in the cytosol. It localises to the mitochondrion. It is found in the cell membrane. It carries out the reaction creatine + ATP = N-phosphocreatine + ADP + H(+). Functionally, reversibly catalyzes the transfer of phosphate between ATP and various phosphogens (e.g. creatine phosphate). Creatine kinase isoenzymes play a central role in energy transduction in tissues with large, fluctuating energy demands, such as skeletal muscle, heart, brain and spermatozoa. Acts as a key regulator of adaptive thermogenesis as part of the futile creatine cycle: localizes to the mitochondria of thermogenic fat cells and acts by mediating phosphorylation of creatine to initiate a futile cycle of creatine phosphorylation and dephosphorylation. During the futile creatine cycle, creatine and N-phosphocreatine are in a futile cycle, which dissipates the high energy charge of N-phosphocreatine as heat without performing any mechanical or chemical work. In Mus musculus (Mouse), this protein is Creatine kinase B-type.